The chain runs to 363 residues: UDP-N-acetylglucosamine--N-acetylmuramyl-(pentapeptide) pyrophosphoryl-undecaprenol N-acetylglucosamine transferase (363 aa).

UDP-N-acetyl-alpha-D-glucosamine contacts are provided by residues 12–14 (TAG), arginine 166, serine 196, and glutamine 291.

This sequence belongs to the glycosyltransferase 28 family. MurG subfamily.

Its subcellular location is the cell inner membrane. The catalysed reaction is di-trans,octa-cis-undecaprenyl diphospho-N-acetyl-alpha-D-muramoyl-L-alanyl-D-glutamyl-meso-2,6-diaminopimeloyl-D-alanyl-D-alanine + UDP-N-acetyl-alpha-D-glucosamine = di-trans,octa-cis-undecaprenyl diphospho-[N-acetyl-alpha-D-glucosaminyl-(1-&gt;4)]-N-acetyl-alpha-D-muramoyl-L-alanyl-D-glutamyl-meso-2,6-diaminopimeloyl-D-alanyl-D-alanine + UDP + H(+). Its pathway is cell wall biogenesis; peptidoglycan biosynthesis. Cell wall formation. Catalyzes the transfer of a GlcNAc subunit on undecaprenyl-pyrophosphoryl-MurNAc-pentapeptide (lipid intermediate I) to form undecaprenyl-pyrophosphoryl-MurNAc-(pentapeptide)GlcNAc (lipid intermediate II). This Legionella pneumophila (strain Paris) protein is UDP-N-acetylglucosamine--N-acetylmuramyl-(pentapeptide) pyrophosphoryl-undecaprenol N-acetylglucosamine transferase.